Here is a 48-residue protein sequence, read N- to C-terminus: Osteocalcin (48 aa).

Residues 1-44 enclose the Gla domain; it reads AGTAPADLTVAQLESLKEVCEANLACEHMMDVSGIIAAYTAYYG. Residues E14, E18, E21, and E27 each coordinate Ca(2+). 3 positions are modified to 4-carboxyglutamate: E14, E18, and E21. An intrachain disulfide couples C20 to C26.

The protein belongs to the osteocalcin/matrix Gla protein family. In terms of processing, gamma-carboxyglutamate residues are formed by vitamin K dependent carboxylation by GGCX. These residues are essential for the binding of calcium.

Its subcellular location is the secreted. It localises to the extracellular space. The protein localises to the extracellular matrix. The carboxylated form is one of the main organic components of the bone matrix, which constitutes 1-2% of the total bone protein. The carboxylated form binds strongly to apatite and calcium. This chain is Osteocalcin (bglap), found in Cyprinus carpio (Common carp).